Here is a 785-residue protein sequence, read N- to C-terminus: uncharacterized protein (785 aa).

The 129-residue stretch at 293–421 (LVGYFLSEGY…LRLISLRLGF (129 aa)) folds into the DOD-type homing endonuclease domain.

In terms of processing, this protein undergoes a protein self splicing that involves a post-translational excision of the intervening region (intein) followed by peptide ligation.

This is an uncharacterized protein from Methanocaldococcus jannaschii (strain ATCC 43067 / DSM 2661 / JAL-1 / JCM 10045 / NBRC 100440) (Methanococcus jannaschii).